The primary structure comprises 2772 residues: Protein DDB_G0276689 (2772 aa).

Disordered stretches follow at residues 50-82 (QQLK…NNNN), 371-415 (NLET…NGKS), 475-514 (LDIN…KNNL), 612-650 (NKNN…NNNE), 685-708 (LRGS…DSSL), and 933-982 (LVNN…NNSN). 4 stretches are compositionally biased toward low complexity: residues 376–412 (NNNN…NNNN), 478–514 (NSKN…KNNL), 614–649 (NNNN…NNNN), and 688–708 (SFSP…DSSL). One copy of the LRR 1 repeat lies at 1065–1089 (LSKWILNLDDNNYNHIPFMSLVLMP). The disordered stretch occupies residues 1282 to 1319 (NNNNIDNNNNNNNNNNNNNNNNNNNNNNNNNNNNNNNN). LRR repeat units lie at residues 1393-1416 (LSNL…TPKN) and 1543-1567 (HKDV…SFSN). Residues 1587–1619 (QNNNYNNNNYNNNYNNNNNNNNNNNNNNNNNNN) show a composition bias toward low complexity. The interval 1587 to 1622 (QNNNYNNNNYNNNYNNNNNNNNNNNNNNNNNNNIDN) is disordered. The LRR 4 repeat unit spans residues 1899–1922 (LEELTKQEIGYQVLLVLPTDLQVE). 2 stretches are compositionally biased toward polar residues: residues 1999-2011 (YVSN…NDQI) and 2073-2083 (LNIVHSTSPNS). Disordered regions lie at residues 1999–2021 (YVSN…KDKK), 2054–2083 (EISN…SPNS), and 2367–2386 (NNSS…NNNN). The LRR 5 repeat unit spans residues 2414 to 2439 (TTIINNIEMDKNRLDEAIYYLKKYGN).

The protein is Protein DDB_G0276689 of Dictyostelium discoideum (Social amoeba).